The following is a 1025-amino-acid chain: Putative calcium-transporting ATPase 11, plasma membrane-type (1025 aa).

Residues 1-157 (MSNLLKDFEV…NRYTEKPARS (157 aa)) are Cytoplasmic-facing. The interval 19–30 (ARQRWRSSVGLV) is interaction with calmodulin. A helical membrane pass occupies residues 158–178 (FLTFVWEALQDITLIILMVCA). Residues 179–196 (VVSIGVGVATEGFPKGMY) are Lumenal-facing. Residues 197–217 (DGTGILLSIILVVMVTAISDY) traverse the membrane as a helical segment. The Cytoplasmic portion of the chain corresponds to 218–345 (KQSLQFRDLD…EDETPLQVKL (128 aa)). A helical transmembrane segment spans residues 346-365 (NGVATIIGKIGLGFAVLTFV). Residues 366–395 (VLCIRFVVEKATAGSITEWSSEDALTLLDY) are Lumenal-facing. The helical transmembrane segment at 396–413 (FAIAVTIIVVAVPEGLPL) threads the bilayer. At 414–801 (AVTLSLAFAM…KWGRAVYINI (388 aa)) the chain is on the cytoplasmic side. The 4-aspartylphosphate intermediate role is filled by D451. The Mg(2+) site is built by D746 and D750. Residues 802–820 (QKFVQFQLTVNVVALIINF) form a helical membrane-spanning segment. The Lumenal segment spans residues 821–831 (VSACITGSAPL). A helical transmembrane segment spans residues 832–852 (TAVQLLWVNMIMDTLGALALA). The Cytoplasmic portion of the chain corresponds to 853 to 872 (TEPPNEGLMKRQPIGRTASF). A helical membrane pass occupies residues 873–895 (ITRAMWRNIIGQSIYQLIVLGIL). Over 896-907 (NFAGKQILNLNG) the chain is Lumenal. The chain crosses the membrane as a helical span at residues 908–929 (PDSTIVLNTIIFNSFVFCQVFN). At 930–947 (EVNSREIEKINVFEGMFK) the chain is on the cytoplasmic side. The chain crosses the membrane as a helical span at residues 948-969 (SWVFVAVMTATVGFQVIIVEFL). Over 970–979 (GAFASTVPLS) the chain is Lumenal. The helical transmembrane segment at 980–1001 (WQHWLLCILIGSVSMILAVGLK) threads the bilayer. The Cytoplasmic portion of the chain corresponds to 1002–1025 (CIPVESNRHHDGYELLPSGPSDSA).

The protein belongs to the cation transport ATPase (P-type) (TC 3.A.3) family. Type IIB subfamily.

It localises to the membrane. It carries out the reaction Ca(2+)(in) + ATP + H2O = Ca(2+)(out) + ADP + phosphate + H(+). With respect to regulation, activated by calmodulin. Functionally, this magnesium-dependent enzyme catalyzes the hydrolysis of ATP coupled with the translocation of calcium from the cytosol out of the cell or into organelles. This is Putative calcium-transporting ATPase 11, plasma membrane-type (ACA11) from Arabidopsis thaliana (Mouse-ear cress).